Reading from the N-terminus, the 254-residue chain is Thiazole synthase (254 aa).

The Schiff-base intermediate with DXP role is filled by Lys95. Residues Gly156, 182-183, and 204-205 contribute to the 1-deoxy-D-xylulose 5-phosphate site; these read AG and NT.

Belongs to the ThiG family. In terms of assembly, homotetramer. Forms heterodimers with either ThiH or ThiS.

The protein resides in the cytoplasm. It carries out the reaction [ThiS sulfur-carrier protein]-C-terminal-Gly-aminoethanethioate + 2-iminoacetate + 1-deoxy-D-xylulose 5-phosphate = [ThiS sulfur-carrier protein]-C-terminal Gly-Gly + 2-[(2R,5Z)-2-carboxy-4-methylthiazol-5(2H)-ylidene]ethyl phosphate + 2 H2O + H(+). It participates in cofactor biosynthesis; thiamine diphosphate biosynthesis. In terms of biological role, catalyzes the rearrangement of 1-deoxy-D-xylulose 5-phosphate (DXP) to produce the thiazole phosphate moiety of thiamine. Sulfur is provided by the thiocarboxylate moiety of the carrier protein ThiS. In vitro, sulfur can be provided by H(2)S. This Shewanella baltica (strain OS223) protein is Thiazole synthase.